The following is a 64-amino-acid chain: Large ribosomal subunit protein bL28 (64 aa).

It belongs to the bacterial ribosomal protein bL28 family.

The polypeptide is Large ribosomal subunit protein bL28 (Campylobacter jejuni subsp. jejuni serotype O:6 (strain 81116 / NCTC 11828)).